Consider the following 345-residue polypeptide: N-acetyl-gamma-glutamyl-phosphate reductase (345 aa).

Residue C149 is part of the active site.

The protein belongs to the NAGSA dehydrogenase family. Type 1 subfamily.

It is found in the cytoplasm. The catalysed reaction is N-acetyl-L-glutamate 5-semialdehyde + phosphate + NADP(+) = N-acetyl-L-glutamyl 5-phosphate + NADPH + H(+). The protein operates within amino-acid biosynthesis; L-arginine biosynthesis; N(2)-acetyl-L-ornithine from L-glutamate: step 3/4. Its function is as follows. Catalyzes the NADPH-dependent reduction of N-acetyl-5-glutamyl phosphate to yield N-acetyl-L-glutamate 5-semialdehyde. This is N-acetyl-gamma-glutamyl-phosphate reductase from Desulforapulum autotrophicum (strain ATCC 43914 / DSM 3382 / VKM B-1955 / HRM2) (Desulfobacterium autotrophicum).